Here is a 59-residue protein sequence, read N- to C-terminus: Embryonic testis differentiation protein (59 aa).

Positions 1–28 (MDEKNPEAVPRPPEQNTELVPPKKSKSK) are disordered.

Specifically expressed in testis.

The polypeptide is Embryonic testis differentiation protein (Mus musculus (Mouse)).